A 335-amino-acid chain; its full sequence is Glycerol-3-phosphate dehydrogenase [NAD(P)+] (335 aa).

NADPH contacts are provided by serine 15, tyrosine 16, arginine 36, and lysine 110. Residues lysine 110, glycine 139, and threonine 141 each contribute to the sn-glycerol 3-phosphate site. Alanine 143 is a binding site for NADPH. 5 residues coordinate sn-glycerol 3-phosphate: lysine 195, aspartate 248, serine 258, arginine 259, and asparagine 260. Lysine 195 functions as the Proton acceptor in the catalytic mechanism. NADPH is bound at residue arginine 259. The NADPH site is built by valine 283 and glutamate 285.

It belongs to the NAD-dependent glycerol-3-phosphate dehydrogenase family.

Its subcellular location is the cytoplasm. It carries out the reaction sn-glycerol 3-phosphate + NAD(+) = dihydroxyacetone phosphate + NADH + H(+). It catalyses the reaction sn-glycerol 3-phosphate + NADP(+) = dihydroxyacetone phosphate + NADPH + H(+). The protein operates within membrane lipid metabolism; glycerophospholipid metabolism. Catalyzes the reduction of the glycolytic intermediate dihydroxyacetone phosphate (DHAP) to sn-glycerol 3-phosphate (G3P), the key precursor for phospholipid synthesis. This Pseudoalteromonas translucida (strain TAC 125) protein is Glycerol-3-phosphate dehydrogenase [NAD(P)+].